The chain runs to 133 residues: p53 and DNA damage-regulated protein 1 (133 aa).

Belongs to the prefoldin subunit beta family. Component of the PAQosome complex which is responsible for the biogenesis of several protein complexes and which consists of R2TP complex members RUVBL1, RUVBL2, RPAP3 and PIH1D1, URI complex members PFDN2, PFDN6, PDRG1, UXT and URI1 as well as ASDURF, POLR2E and DNAAF10/WDR92. As to expression, predominantly expressed in normal testis and exhibits reduced but detectable expression in other organs.

Its subcellular location is the cytoplasm. Its function is as follows. May play a role in chaperone-mediated protein folding. The chain is p53 and DNA damage-regulated protein 1 (PDRG1) from Homo sapiens (Human).